We begin with the raw amino-acid sequence, 93 residues long: Acylphosphatase (93 aa).

An Acylphosphatase-like domain is found at Arg6–Tyr93. Catalysis depends on residues Arg21 and Asn39.

Belongs to the acylphosphatase family.

The enzyme catalyses an acyl phosphate + H2O = a carboxylate + phosphate + H(+). This is Acylphosphatase (acyP) from Geobacter metallireducens (strain ATCC 53774 / DSM 7210 / GS-15).